The primary structure comprises 297 residues: Protein-L-isoaspartate O-methyltransferase (297 aa).

A disordered region spans residues 20–57; sequence RKPAPARTAGMPAVGAPGPAQAQAKARDKQPSAPTAAA. The segment covering 28-43 has biased composition (low complexity); that stretch reads AGMPAVGAPGPAQAQA. Residue serine 133 is part of the active site.

It belongs to the methyltransferase superfamily. L-isoaspartyl/D-aspartyl protein methyltransferase family.

The protein localises to the cytoplasm. It catalyses the reaction [protein]-L-isoaspartate + S-adenosyl-L-methionine = [protein]-L-isoaspartate alpha-methyl ester + S-adenosyl-L-homocysteine. In terms of biological role, catalyzes the methyl esterification of L-isoaspartyl residues in peptides and proteins that result from spontaneous decomposition of normal L-aspartyl and L-asparaginyl residues. It plays a role in the repair and/or degradation of damaged proteins. The protein is Protein-L-isoaspartate O-methyltransferase of Cupriavidus pinatubonensis (strain JMP 134 / LMG 1197) (Cupriavidus necator (strain JMP 134)).